The primary structure comprises 234 residues: Large ribosomal subunit protein uL1 (234 aa).

It belongs to the universal ribosomal protein uL1 family. Part of the 50S ribosomal subunit.

Its function is as follows. Binds directly to 23S rRNA. The L1 stalk is quite mobile in the ribosome, and is involved in E site tRNA release. Protein L1 is also a translational repressor protein, it controls the translation of the L11 operon by binding to its mRNA. The polypeptide is Large ribosomal subunit protein uL1 (Serratia proteamaculans (strain 568)).